The following is a 360-amino-acid chain: ELAV-like protein 2 (360 aa).

The tract at residues Met-1 to Asp-36 is disordered. 2 consecutive RRM domains span residues Thr-39–Pro-117 and Ala-125–Asn-205. At Ser-221 the chain carries Phosphoserine. One can recognise an RRM 3 domain in the interval Trp-277–Asn-355.

This sequence belongs to the RRM elav family. In terms of assembly, interacts with IGF2BP1. Interacts with MAP1B light chain LC1. In terms of tissue distribution, brain; neural-specific. Expressed in the hippocampus.

RNA-binding protein that binds to the 3' untranslated region (3'UTR) of target mRNAs. Seems to recognize a GAAA motif. Can bind to its own 3'UTR, the FOS 3'UTR and the ID 3'UTR. The protein is ELAV-like protein 2 (Elavl2) of Mus musculus (Mouse).